Consider the following 459-residue polypeptide: MVSFTKFTLQLLSASAAFAYFEPLTIKGRKFFKNDTQFYIKGVAYQPAVDAEETSTIVDPLAEVNYKNCTEDAKIISNLGANVIRVYAVNASLNHDKCMEAFRNESIYVFLDLANPKTGIDRDTPTWNTDQFSSYQSVIDTFQKYNNTGAFFAGNEVVNNASNAPAVAYVRAAVRDSKNYIKSKKYRTIPVGYAGADIPVVRTELAAYLSCNATKLNNDTNSETDFLGYNMYEWCGHSDFYTSGYAARTQELENFTIPIFLSEFGCNKVTPRVFTEVQAIYSDNMTNVWSGGIVYEYSQEVNDYGLVNVSSTGERVLTTDYNNLKKQWASISPNITYKHSYNPNGTIPECPSRNKTSWAVSANAFPVTPNTTICSNAVKNLKCSANGTPSGSKISQVLSELCYYDNKACSSISSDPYEGTYGNYTGCTGVQQLSIALNAYTQDHGADSCSWGGVGELKA.

The N-terminal stretch at 1-19 (MVSFTKFTLQLLSASAAFA) is a signal peptide. Asn-34 and Asn-68 each carry an N-linked (GlcNAc...) asparagine glycan. Cysteines 69 and 98 form a disulfide. Tyr-87 provides a ligand contact to (1,3-beta-D-glucosyl)n. N-linked (GlcNAc...) asparagine glycans are attached at residues Asn-90, Asn-104, and Asn-146. Residues Asn-155 and Glu-156 each contribute to the (1,3-beta-D-glucosyl)n site. Glu-156 acts as the Proton donor in catalysis. A glycan (N-linked (GlcNAc...) asparagine) is linked at Asn-160. The (1,3-beta-D-glucosyl)n site is built by Asp-197 and Arg-202. Disulfide bonds link Cys-211/Cys-350 and Cys-235/Cys-266. Asn-212, Asn-218, and Asn-254 each carry an N-linked (GlcNAc...) asparagine glycan. Residue Glu-263 is the Nucleophile of the active site. N-linked (GlcNAc...) asparagine glycosylation occurs at Asn-284. Tyr-295 contributes to the (1,3-beta-D-glucosyl)n binding site. N-linked (GlcNAc...) asparagine glycans are attached at residues Asn-308, Asn-334, Asn-344, Asn-354, and Asn-370. 3 cysteine pairs are disulfide-bonded: Cys-374–Cys-427, Cys-383–Cys-449, and Cys-402–Cys-409. An N-linked (GlcNAc...) asparagine glycan is attached at Asn-423.

It belongs to the glycosyl hydrolase 72 family.

Its subcellular location is the endoplasmic reticulum lumen. The protein localises to the secreted. Splits internally a 1,3-beta-glucan molecule and transfers the newly generated reducing end (the donor) to the non-reducing end of another 1,3-beta-glucan molecule (the acceptor) forming a 1,3-beta linkage, resulting in the elongation of 1,3-beta-glucan chains in the cell wall. The polypeptide is 1,3-beta-glucanosyltransferase gas2 (gas2) (Schizosaccharomyces pombe (strain 972 / ATCC 24843) (Fission yeast)).